The primary structure comprises 290 residues: Undecaprenyl-diphosphatase 2 (290 aa).

6 consecutive transmembrane segments (helical) span residues 104-124 (WMVI…KDLI), 128-148 (LRNL…FILA), 174-194 (CLAL…GLFL), 205-225 (SFLL…PDAF), 237-257 (QLFV…AWLL), and 268-288 (FALW…FGVL).

It belongs to the UppP family.

It localises to the cell membrane. The enzyme catalyses di-trans,octa-cis-undecaprenyl diphosphate + H2O = di-trans,octa-cis-undecaprenyl phosphate + phosphate + H(+). Functionally, catalyzes the dephosphorylation of undecaprenyl diphosphate (UPP). Confers resistance to bacitracin. The chain is Undecaprenyl-diphosphatase 2 from Corynebacterium jeikeium (strain K411).